The sequence spans 573 residues: Sulfite reductase [NADPH] hemoprotein beta-component (573 aa).

Positions 1–20 (MAKVELKAPDGPPSDVERIK) are disordered. [4Fe-4S] cluster-binding residues include C438, C444, C483, and C487. C487 serves as a coordination point for siroheme.

It belongs to the nitrite and sulfite reductase 4Fe-4S domain family. As to quaternary structure, alpha(8)-beta(8). The alpha component is a flavoprotein, the beta component is a hemoprotein. Siroheme serves as cofactor. The cofactor is [4Fe-4S] cluster.

The enzyme catalyses hydrogen sulfide + 3 NADP(+) + 3 H2O = sulfite + 3 NADPH + 4 H(+). Its pathway is sulfur metabolism; hydrogen sulfide biosynthesis; hydrogen sulfide from sulfite (NADPH route): step 1/1. Its function is as follows. Component of the sulfite reductase complex that catalyzes the 6-electron reduction of sulfite to sulfide. This is one of several activities required for the biosynthesis of L-cysteine from sulfate. This Geobacillus kaustophilus (strain HTA426) protein is Sulfite reductase [NADPH] hemoprotein beta-component.